The chain runs to 362 residues: MERITVTLGERSYPITIAAGLFNEPASFLPLKSGDQVMLVTNETLAPLYLDKVRGVLERAGVNVDSVILPDGEQYKSLTVLDTVFTALLKKPHGRDTTLVALGGGVIGDLTGFAAASYQRGVRFIQVPTTLLSQVDSSVGGKTAVNHPLGKNMIGAFYQPASVVVDLDCLKTLPARELASGLAEVIKYGIILDADFFTWLEGNLDALLRLDGPAMAYCIRRCCELKAEVVAADEREAGLRALLNLGHTFGHAIEAEMGYGNWLHGEAVAAGIVMAARASERLGQFSSADTQRIIALLERAGLPVNGPCEMSAQDYLPHMLRDKKVLAGELRLVLPLAIGKSEVRGGVSHEVVLSAIADCQQA.

NAD(+) contacts are provided by residues 71 to 76, 105 to 109, 129 to 130, Lys142, Lys151, and 169 to 172; these read DGEQYK, GVIGD, TT, and CLKT. Residues Glu184, His247, and His264 each coordinate Zn(2+).

Belongs to the sugar phosphate cyclases superfamily. Dehydroquinate synthase family. Requires Co(2+) as cofactor. It depends on Zn(2+) as a cofactor. The cofactor is NAD(+).

It localises to the cytoplasm. The enzyme catalyses 7-phospho-2-dehydro-3-deoxy-D-arabino-heptonate = 3-dehydroquinate + phosphate. The protein operates within metabolic intermediate biosynthesis; chorismate biosynthesis; chorismate from D-erythrose 4-phosphate and phosphoenolpyruvate: step 2/7. Its function is as follows. Catalyzes the conversion of 3-deoxy-D-arabino-heptulosonate 7-phosphate (DAHP) to dehydroquinate (DHQ). The sequence is that of 3-dehydroquinate synthase from Salmonella agona (strain SL483).